Reading from the N-terminus, the 298-residue chain is Lipoyl synthase (298 aa).

7 residues coordinate [4Fe-4S] cluster: Cys40, Cys45, Cys51, Cys67, Cys71, Cys74, and Ser280. The Radical SAM core domain occupies 53–269 (AVRRTATFMI…KEIAMAKGFS (217 aa)).

Belongs to the radical SAM superfamily. Lipoyl synthase family. [4Fe-4S] cluster serves as cofactor.

Its subcellular location is the cytoplasm. It carries out the reaction [[Fe-S] cluster scaffold protein carrying a second [4Fe-4S](2+) cluster] + N(6)-octanoyl-L-lysyl-[protein] + 2 oxidized [2Fe-2S]-[ferredoxin] + 2 S-adenosyl-L-methionine + 4 H(+) = [[Fe-S] cluster scaffold protein] + N(6)-[(R)-dihydrolipoyl]-L-lysyl-[protein] + 4 Fe(3+) + 2 hydrogen sulfide + 2 5'-deoxyadenosine + 2 L-methionine + 2 reduced [2Fe-2S]-[ferredoxin]. The protein operates within protein modification; protein lipoylation via endogenous pathway; protein N(6)-(lipoyl)lysine from octanoyl-[acyl-carrier-protein]. In terms of biological role, catalyzes the radical-mediated insertion of two sulfur atoms into the C-6 and C-8 positions of the octanoyl moiety bound to the lipoyl domains of lipoate-dependent enzymes, thereby converting the octanoylated domains into lipoylated derivatives. This chain is Lipoyl synthase, found in Bacillus pumilus (strain SAFR-032).